Here is a 220-residue protein sequence, read N- to C-terminus: Thiopurine S-methyltransferase (220 aa).

Residues W10, L45, E66, and R123 each coordinate S-adenosyl-L-methionine.

It belongs to the class I-like SAM-binding methyltransferase superfamily. TPMT family.

The protein resides in the cytoplasm. The catalysed reaction is S-adenosyl-L-methionine + a thiopurine = S-adenosyl-L-homocysteine + a thiopurine S-methylether.. This chain is Thiopurine S-methyltransferase, found in Nitrosomonas eutropha (strain DSM 101675 / C91 / Nm57).